The sequence spans 309 residues: Protein FdhE (309 aa).

The protein belongs to the FdhE family.

The protein resides in the cytoplasm. In terms of biological role, necessary for formate dehydrogenase activity. The sequence is that of Protein FdhE from Salmonella paratyphi A (strain ATCC 9150 / SARB42).